Consider the following 373-residue polypeptide: Molybdenum import ATP-binding protein ModC (373 aa).

The region spanning 4–240 (LTPPTIRAAF…PKLPLAIARD (237 aa)) is the ABC transporter domain. 38–45 (GPSGCGKS) is an ATP binding site. Residues 299 to 369 (ASSILNAIAA…IKGVALAPGR (71 aa)) form the Mop domain.

The protein belongs to the ABC transporter superfamily. Molybdate importer (TC 3.A.1.8) family. The complex is composed of two ATP-binding proteins (ModC), two transmembrane proteins (ModB) and a solute-binding protein (ModA).

It is found in the cell inner membrane. The enzyme catalyses molybdate(out) + ATP + H2O = molybdate(in) + ADP + phosphate + H(+). Part of the ABC transporter complex ModABC involved in molybdenum import. Responsible for energy coupling to the transport system. This Rhodopseudomonas palustris (strain ATCC BAA-98 / CGA009) protein is Molybdenum import ATP-binding protein ModC.